The chain runs to 325 residues: Coiled-coil domain-containing protein 130 homolog (325 aa).

The stretch at 156-262 (LKLENKKLDI…KLKRELIKNE (107 aa)) forms a coiled coil.

It belongs to the CWC16 family.

In Dictyostelium discoideum (Social amoeba), this protein is Coiled-coil domain-containing protein 130 homolog.